Here is a 212-residue protein sequence, read N- to C-terminus: Cell division protein YtfB (212 aa).

A helical membrane pass occupies residues Gly34–Ser50. The disordered stretch occupies residues Asn88 to Gln127. Residues Glu99–Pro120 are compositionally biased toward low complexity. Residues Pro117–Arg212 are oapA.

Belongs to the OapA family.

The protein resides in the cell inner membrane. In terms of biological role, cell division protein whose function is related to the generation of a transient cell wall structure. Function is linked to the late stages of cell division. The sequence is that of Cell division protein YtfB (ytfB) from Escherichia coli (strain K12).